Reading from the N-terminus, the 227-residue chain is 27 kDa A-type inclusion protein (227 aa).

Residues 4–210 (MPKQREMRRL…AECRRGNNGS (207 aa)) are a coiled coil.

The sequence is that of 27 kDa A-type inclusion protein from Bos taurus (Bovine).